Here is a 318-residue protein sequence, read N- to C-terminus: Mitochondrial thiamine pyrophosphate carrier (318 aa).

Solcar repeat units follow at residues 13 to 106, 116 to 202, and 214 to 309; these read NSKL…LTEL, HQFS…LKRA, and TGNL…FCNL. 5 helical membrane passes run 19–39, 87–107, 122–142, 173–193, and 220–240; these read AVAG…LDVI, ILSI…TELL, FVCG…VDVL, VFYK…GLQF, and LLCG…LDLI. Residues 241 to 246 carry the Substrate recognition motif; that stretch reads KKRLQV. The helical transmembrane segment at 293–313 threads the bilayer; it reads ALSTGFMFFWYELFCNLFHCI.

The protein belongs to the mitochondrial carrier (TC 2.A.29) family.

It is found in the mitochondrion membrane. It carries out the reaction thiamine phosphate(out) + thiamine diphosphate(in) = thiamine phosphate(in) + thiamine diphosphate(out). Mitochondrial transporter mediating uptake of thiamine diphosphate into mitochondria. It is not clear if the antiporter activity is affected by the membrane potential or by the proton electrochemical gradient. This is Mitochondrial thiamine pyrophosphate carrier (Slc25a19) from Mus musculus (Mouse).